A 795-amino-acid chain; its full sequence is Delta-1-pyrroline-5-carboxylate synthase (795 aa).

The glutamate 5-kinase stretch occupies residues 1–361; the sequence is MLSQVYRCGF…FFSEVKPAGP (361 aa). Residues Ser-117, Asp-223, and Asn-246 each contribute to the substrate site. ATP contacts are provided by residues 266–267 and 305–311; these read SD and MGGMEAK. 3 positions are modified to N6-succinyllysine: Lys-311, Lys-347, and Lys-550. Residues 362–795 are gamma-glutamyl phosphate reductase; that stretch reads TVEQQGEMAR…NLPIPQRNTN (434 aa).

This sequence in the N-terminal section; belongs to the glutamate 5-kinase family. In the C-terminal section; belongs to the gamma-glutamyl phosphate reductase family. As to quaternary structure, can form homodimers/multimers.

It is found in the mitochondrion. The protein resides in the mitochondrion matrix. It carries out the reaction L-glutamate + ATP = L-glutamyl 5-phosphate + ADP. It catalyses the reaction L-glutamate 5-semialdehyde + phosphate + NADP(+) = L-glutamyl 5-phosphate + NADPH + H(+). It functions in the pathway amino-acid biosynthesis; L-proline biosynthesis; L-glutamate 5-semialdehyde from L-glutamate: step 1/2. It participates in amino-acid biosynthesis; L-proline biosynthesis; L-glutamate 5-semialdehyde from L-glutamate: step 2/2. Isoform Short: Inhibited by L-ornithine with a Ki of approximately 0.25 mm. Isoform Long: Insensitive to ornithine inhibition. This is due to the two amino acid insert which abolishes feedback inhibition of P5CS activity by L-ornithine. In terms of biological role, bifunctional enzyme that converts glutamate to glutamate 5-semialdehyde, an intermediate in the biosynthesis of proline, ornithine and arginine. This Homo sapiens (Human) protein is Delta-1-pyrroline-5-carboxylate synthase (ALDH18A1).